The following is a 337-amino-acid chain: Heat-inducible transcription repressor HrcA (337 aa).

The protein belongs to the HrcA family.

Its function is as follows. Negative regulator of class I heat shock genes (grpE-dnaK-dnaJ and groELS operons). Prevents heat-shock induction of these operons. The polypeptide is Heat-inducible transcription repressor HrcA (Nocardioides sp. (strain ATCC BAA-499 / JS614)).